The primary structure comprises 142 residues: MLMPKRVKYRKQHRGRMKGKAKGGSLVAFGDYGLKALEAHWITAQQIEACRIAITRTLKKSGKLWIRIFPDKSYTKHPAESKLGKGKGNVEGWVAVVKPGRVMFEIGGVSEELAREALEYAATKLPIRTKIVKRHEIGGEAV.

It belongs to the universal ribosomal protein uL16 family. Part of the 50S ribosomal subunit.

In terms of biological role, binds 23S rRNA and is also seen to make contacts with the A and possibly P site tRNAs. This chain is Large ribosomal subunit protein uL16, found in Thermosipho melanesiensis (strain DSM 12029 / CIP 104789 / BI429).